The primary structure comprises 459 residues: Adenylosuccinate synthetase isozyme 1 C (459 aa).

The interval 1–31 is disordered; sequence MSFSWSAKDHKSYTNPPSNPTQGLKRPRNDT. Over residues 13–22 the composition is skewed to polar residues; the sequence is YTNPPSNPTQ. Residues 44–50 and 72–74 contribute to the GTP site; these read GDEGKGK and GHT. The Proton acceptor role is filled by Asp-45. The Mg(2+) site is built by Asp-45 and Gly-72. Asp-45 serves as a coordination point for substrate. IMP-binding positions include 45–48, 70–73, Thr-165, Arg-179, Asn-258, Thr-273, and Arg-337; these read DEGK and NAGH. The Proton donor role is filled by His-73. 333–339 lines the substrate pocket; sequence VTTGRKR. GTP contacts are provided by residues Arg-339, 365–367, and 447–450; these read KLD and GVGK.

The protein belongs to the adenylosuccinate synthetase family. In terms of assembly, homodimer. It depends on Mg(2+) as a cofactor.

Its subcellular location is the cytoplasm. The enzyme catalyses IMP + L-aspartate + GTP = N(6)-(1,2-dicarboxyethyl)-AMP + GDP + phosphate + 2 H(+). The protein operates within purine metabolism; AMP biosynthesis via de novo pathway; AMP from IMP: step 1/2. Component of the purine nucleotide cycle (PNC), which interconverts IMP and AMP to regulate the nucleotide levels in various tissues, and which contributes to glycolysis and ammoniagenesis. Catalyzes the first committed step in the biosynthesis of AMP from IMP. The sequence is that of Adenylosuccinate synthetase isozyme 1 C (adss1c) from Salmo salar (Atlantic salmon).